Reading from the N-terminus, the 612-residue chain is Membrane protein insertase YidC (612 aa).

The next 7 helical transmembrane spans lie at 4–24 (NTII…YLNH), 329–349 (LVPL…IPIF), 358–378 (VNLG…LFPL), 434–454 (ILLQ…AIGL), 484–504 (FLGN…ILNT), 524–544 (LTMY…PAGL), and 546–566 (YYYL…RGLV).

The protein belongs to the OXA1/ALB3/YidC family. Type 1 subfamily. In terms of assembly, interacts with the Sec translocase complex via SecD. Specifically interacts with transmembrane segments of nascent integral membrane proteins during membrane integration.

The protein localises to the cell inner membrane. Required for the insertion and/or proper folding and/or complex formation of integral membrane proteins into the membrane. Involved in integration of membrane proteins that insert both dependently and independently of the Sec translocase complex, as well as at least some lipoproteins. Aids folding of multispanning membrane proteins. This Azobacteroides pseudotrichonymphae genomovar. CFP2 protein is Membrane protein insertase YidC.